The following is a 1409-amino-acid chain: DNA-directed RNA polymerase subunit beta' (1409 aa).

Positions 70, 72, 85, and 88 each coordinate Zn(2+). 3 residues coordinate Mg(2+): Asp-458, Asp-460, and Asp-462. Zn(2+) contacts are provided by Cys-813, Cys-887, Cys-894, and Cys-897.

The protein belongs to the RNA polymerase beta' chain family. In terms of assembly, the RNAP catalytic core consists of 2 alpha, 1 beta, 1 beta' and 1 omega subunit. When a sigma factor is associated with the core the holoenzyme is formed, which can initiate transcription. Mg(2+) serves as cofactor. The cofactor is Zn(2+).

It catalyses the reaction RNA(n) + a ribonucleoside 5'-triphosphate = RNA(n+1) + diphosphate. Functionally, DNA-dependent RNA polymerase catalyzes the transcription of DNA into RNA using the four ribonucleoside triphosphates as substrates. This is DNA-directed RNA polymerase subunit beta' from Acidovorax ebreus (strain TPSY) (Diaphorobacter sp. (strain TPSY)).